Consider the following 92-residue polypeptide: UPF0250 protein Smlt4048 (92 aa).

It belongs to the UPF0250 family.

The sequence is that of UPF0250 protein Smlt4048 from Stenotrophomonas maltophilia (strain K279a).